Reading from the N-terminus, the 347-residue chain is Holliday junction branch migration complex subunit RuvB (347 aa).

Positions 1–186 (MKDENSISFL…FGITARFELY (186 aa)) are large ATPase domain (RuvB-L). ATP is bound by residues leucine 25, arginine 26, glycine 67, lysine 70, threonine 71, threonine 72, 133–135 (EDY), arginine 176, tyrosine 186, and arginine 223. Threonine 71 is a binding site for Mg(2+). Positions 187–257 (SEIELVEIIK…IVSIGLEMLR (71 aa)) are small ATPAse domain (RuvB-S). The tract at residues 260–347 (GEGLDEQDRN…GLNENQRVSF (88 aa)) is head domain (RuvB-H). 2 residues coordinate DNA: arginine 315 and arginine 320.

Belongs to the RuvB family. Homohexamer. Forms an RuvA(8)-RuvB(12)-Holliday junction (HJ) complex. HJ DNA is sandwiched between 2 RuvA tetramers; dsDNA enters through RuvA and exits via RuvB. An RuvB hexamer assembles on each DNA strand where it exits the tetramer. Each RuvB hexamer is contacted by two RuvA subunits (via domain III) on 2 adjacent RuvB subunits; this complex drives branch migration. In the full resolvosome a probable DNA-RuvA(4)-RuvB(12)-RuvC(2) complex forms which resolves the HJ.

It localises to the cytoplasm. It catalyses the reaction ATP + H2O = ADP + phosphate + H(+). Its function is as follows. The RuvA-RuvB-RuvC complex processes Holliday junction (HJ) DNA during genetic recombination and DNA repair, while the RuvA-RuvB complex plays an important role in the rescue of blocked DNA replication forks via replication fork reversal (RFR). RuvA specifically binds to HJ cruciform DNA, conferring on it an open structure. The RuvB hexamer acts as an ATP-dependent pump, pulling dsDNA into and through the RuvAB complex. RuvB forms 2 homohexamers on either side of HJ DNA bound by 1 or 2 RuvA tetramers; 4 subunits per hexamer contact DNA at a time. Coordinated motions by a converter formed by DNA-disengaged RuvB subunits stimulates ATP hydrolysis and nucleotide exchange. Immobilization of the converter enables RuvB to convert the ATP-contained energy into a lever motion, pulling 2 nucleotides of DNA out of the RuvA tetramer per ATP hydrolyzed, thus driving DNA branch migration. The RuvB motors rotate together with the DNA substrate, which together with the progressing nucleotide cycle form the mechanistic basis for DNA recombination by continuous HJ branch migration. Branch migration allows RuvC to scan DNA until it finds its consensus sequence, where it cleaves and resolves cruciform DNA. In Borreliella burgdorferi (strain ATCC 35210 / DSM 4680 / CIP 102532 / B31) (Borrelia burgdorferi), this protein is Holliday junction branch migration complex subunit RuvB.